The primary structure comprises 277 residues: MAVKGFRPTTPTRREMTMCTFEEITTSTPEKSLLVSLKKSGGRNANGKITVRHIGGGAKRKYRIIDFKRNKDNIPAKVVSIEYDPNRTAFIALVVYADGEKRYIIAPVGLKVGDTVVSGPESDIKVGNCLPIRNIPVGTVIHNIELAAGKGAQLVRSAGNSAQLMAKEGDYSQVRLPSGEVRYIRVECRATIGVVSNQTNEIVNIGKAGRKRHMGVRPTVRGSVMNPNDHPHGGGEGRSPIGHPSPRTPWGKPALGYKTRKNKKYSDRFIVKRRHDK.

Residues 219–277 form a disordered region; that stretch reads TVRGSVMNPNDHPHGGGEGRSPIGHPSPRTPWGKPALGYKTRKNKKYSDRFIVKRRHDK.

This sequence belongs to the universal ribosomal protein uL2 family. Part of the 50S ribosomal subunit. Forms a bridge to the 30S subunit in the 70S ribosome.

Functionally, one of the primary rRNA binding proteins. Required for association of the 30S and 50S subunits to form the 70S ribosome, for tRNA binding and peptide bond formation. It has been suggested to have peptidyltransferase activity; this is somewhat controversial. Makes several contacts with the 16S rRNA in the 70S ribosome. The protein is Large ribosomal subunit protein uL2 of Clostridium botulinum (strain 657 / Type Ba4).